A 597-amino-acid chain; its full sequence is Kelch-like protein 21 (597 aa).

A BTB domain is found at 35-103 (LDVTLEAAGG…SYTGRVAVSG (69 aa)). Residues 138 to 239 (CLDMQDFAEA…RRFYLLAHVE (102 aa)) form the BACK domain. 6 Kelch repeats span residues 287-335 (ILVL…ALGN), 336-382 (DIYV…VLNG), 384-422 (LYVVAADSTERYDHATDSWEALQPMTYPMDNCSTTACRG), 423-470 (RLYA…TLNG), 472-512 (MYFV…ALGG), and 513-560 (KLYV…SIFR). A disordered region spans residues 570–597 (GRGFELNSGSSDVDAGHHRLPQNPEELQ).

In terms of assembly, component of the BCR(KLHL21) E3 ubiquitin ligase complex, at least composed of CUL3, KLHL21 and RBX1.

It localises to the cytoplasm. Its subcellular location is the cytoskeleton. It is found in the spindle. It functions in the pathway protein modification; protein ubiquitination. Functionally, substrate-specific adapter of BCR (BTB-CUL3-RBX1) E3 ubiquitin-protein ligase complex required for efficient chromosome alignment and cytokinesis. The BCR(KLHL21) E3 ubiquitin ligase complex regulates localization of the chromosomal passenger complex (CPC) from chromosomes to the spindle midzone in anaphase and mediates the ubiquitination of AURKB. Ubiquitination of AURKB by BCR(KLHL21) E3 ubiquitin ligase complex may not lead to its degradation by the proteasome. This Rattus norvegicus (Rat) protein is Kelch-like protein 21 (Klhl21).